Consider the following 335-residue polypeptide: Karyogamy protein KAR4 (335 aa).

The interval 1–25 (MAFQDPTYDQNKSRHINNSHLQGPN) is disordered. Residues 16–25 (INNSHLQGPN) are compositionally biased toward polar residues.

This sequence belongs to the MT-A70-like family. As to quaternary structure, component of the MIS (mRNA N6-methyladenosine (m6A) methylation) complex, at least composed of IME4, KAR4, MUM2, SLZ1, and VIR1. Interacts with VIR1.

It is found in the nucleus. The protein localises to the cytoplasm. In terms of biological role, component of the MIS complex, a complex that mediates N6-methyladenosine (m6A) methylation of meiotic mRNAs and is required for initiation of meiosis, progression through the meiotic divisions and sporulation. May assist STE12 in the pheromone-dependent expression of KAR3 and CIK1. The polypeptide is Karyogamy protein KAR4 (KAR4) (Saccharomyces cerevisiae (strain ATCC 204508 / S288c) (Baker's yeast)).